An 834-amino-acid chain; its full sequence is MKLCGVRGSGVSLMRSSNFPCFRAAHNGGAPTATRHQSLCGRCLDSHMGAGKRWCFRPLLAEPRRYGSASSASTTDAATAPVHGEDLYVSHYAIPEDARRLVGTPQLLPRNPAEEVAFKKNLIRSFPQACIRNVSVVAHVDHGKTTLSDAMLRFSNLLPADGATGTFTDRLKVEKERGITIKAQTCSVLLTVRETGTQYLVNLIDTPGHVDFQYEVSRSLCASEGAALLVDVRQGVEAQTMAQFYAALEQNLTILPVLTKMDNVMSDAEVEKTLLQLEDSTGLLSREVILTSAKSKQGIEQLFQQIIDKVPPPRGREGFSDMKQLPAMHPDSADRKKVEKELVPLRALLFDCWTSESSGMTDGAASAPVSTVSSVSSGTTAASGGQSVAKDGIYGLIRVMDGTVTPGTTVTFFHSGKKHEVREVGIIHPTLHPTAALTAGMVGFVFFPGLLKKDVFIGDTLCTLPTRKHTMRVVATGPPETASRTKPATAAETASSDDASGSSGSSVVEPIPGFKTVQPVVFAGFYPDEGVYITQLREAVDLLCVNDPSVTVEQLQCPALGPGLQLGFLGFLHMQVFKERLLMEFGQTVLVTPPQVQYMYVEQHGDPDDPAQRKPVSVSNWRWPHEGVGAYLEPFITATVLTPSEYLNEINSAALSAFRGEMQEMRVIDGARTLVRYRMPLADLARGFFSTVKSSSHGYATLEYDDPTYMTADLVKMDIVINKAHISALSTICLRHEATTHARRIIGSLKENLLRSSVDLPLQALVGSKIIARETVKAYRKDVTAKIHAGDISRKQKKWNDQKKGKERMARRSVGTVTLDQSVLAAALGATTAR.

Residues 1–66 (MKLCGVRGSG…RPLLAEPRRY (66 aa)) constitute a mitochondrion transit peptide. In terms of domain architecture, tr-type G spans 129–314 (ACIRNVSVVA…QIIDKVPPPR (186 aa)). Residues 138–145 (AHVDHGKT), 205–209 (DTPGH), and 259–262 (TKMD) contribute to the GTP site. Positions 475-507 (ATGPPETASRTKPATAAETASSDDASGSSGSSV) are disordered. A compositionally biased stretch (low complexity) spans 488–507 (ATAAETASSDDASGSSGSSV).

This sequence belongs to the TRAFAC class translation factor GTPase superfamily. Classic translation factor GTPase family. LepA subfamily.

Its subcellular location is the mitochondrion inner membrane. It carries out the reaction GTP + H2O = GDP + phosphate + H(+). Functionally, promotes mitochondrial protein synthesis. May act as a fidelity factor of the translation reaction, by catalyzing a one-codon backward translocation of tRNAs on improperly translocated ribosomes. Binds to mitochondrial ribosomes in a GTP-dependent manner. In Leishmania major, this protein is Translation factor GUF1 homolog, mitochondrial.